Consider the following 225-residue polypeptide: MKHVAPPPTTEAVFGDRLPLAQRYAEFLATAGVERGLIGPRETDRIWDRHILNSAALGELVESGDRIADIGSGAGLPGIPLALARPDVHVTLIEPMQRRCEFLTEVVDALGVAVIVVRGRAEDPAVRREVGEMDVVTSRAVGSLDKLATWSMGILRESGRMLALKGARAEAEIEENRRVLARAGAVDVRVLRCGADYLNPPATVVEARRATPSNGRGRPGRSSRR.

S-adenosyl-L-methionine-binding positions include G71, L76, 121-122 (AE), and R139. The segment at 204 to 225 (VVEARRATPSNGRGRPGRSSRR) is disordered.

This sequence belongs to the methyltransferase superfamily. RNA methyltransferase RsmG family.

It localises to the cytoplasm. Its function is as follows. Specifically methylates the N7 position of guanine in position 518 of 16S rRNA. The polypeptide is Ribosomal RNA small subunit methyltransferase G (Mycobacterium sp. (strain JLS)).